A 116-amino-acid polypeptide reads, in one-letter code: Large ribosomal subunit protein bL20 (116 aa).

It belongs to the bacterial ribosomal protein bL20 family.

Functionally, binds directly to 23S ribosomal RNA and is necessary for the in vitro assembly process of the 50S ribosomal subunit. It is not involved in the protein synthesizing functions of that subunit. This Helicobacter pylori (strain Shi470) protein is Large ribosomal subunit protein bL20.